The following is a 446-amino-acid chain: tRNA-2-methylthio-N(6)-dimethylallyladenosine synthase (446 aa).

Residues 3–120 (KKIYIKTFGC…LPEMLKQRRS (118 aa)) form the MTTase N-terminal domain. The [4Fe-4S] cluster site is built by cysteine 12, cysteine 49, cysteine 83, cysteine 157, cysteine 161, and cysteine 164. In terms of domain architecture, Radical SAM core spans 143-375 (KVEGATAFVS…QAVIDQNTRR (233 aa)). In terms of domain architecture, TRAM spans 378-444 (DEMVGTVQRI…AYTLRGEIIV (67 aa)).

The protein belongs to the methylthiotransferase family. MiaB subfamily. As to quaternary structure, monomer. [4Fe-4S] cluster serves as cofactor.

It is found in the cytoplasm. The catalysed reaction is N(6)-dimethylallyladenosine(37) in tRNA + (sulfur carrier)-SH + AH2 + 2 S-adenosyl-L-methionine = 2-methylsulfanyl-N(6)-dimethylallyladenosine(37) in tRNA + (sulfur carrier)-H + 5'-deoxyadenosine + L-methionine + A + S-adenosyl-L-homocysteine + 2 H(+). Catalyzes the methylthiolation of N6-(dimethylallyl)adenosine (i(6)A), leading to the formation of 2-methylthio-N6-(dimethylallyl)adenosine (ms(2)i(6)A) at position 37 in tRNAs that read codons beginning with uridine. The sequence is that of tRNA-2-methylthio-N(6)-dimethylallyladenosine synthase from Janthinobacterium sp. (strain Marseille) (Minibacterium massiliensis).